Reading from the N-terminus, the 142-residue chain is Cellulose/chitin binding protein BQ2027_MB2009 (142 aa).

The signal sequence occupies residues 1 to 37 (MAGLNIYVRRWRTALHATVSALIVAILGLAITPVASA). Positions 38–142 (ATARATLSVT…CLLNGQYPCT (105 aa)) constitute a CBM2 domain.

Its subcellular location is the secreted. It is found in the cell wall. It localises to the cell membrane. Carbohydrate binding protein that binds chitin and cellulose. Lacks enzymatic activity and does not hydrolyze chitin and cellulose. May interact with mycobacterial biofilms, which are rich in cellulose, and play a role in biofilm formation. Could also act as an adhesin, improving the initial attachment to host cells and aiding M.bovis during the initial stages of infection. In terms of biological role, may act as a virulence factor that modulates host immune responses and contributes to host immune evasion. This is Cellulose/chitin binding protein BQ2027_MB2009 from Mycobacterium bovis (strain ATCC BAA-935 / AF2122/97).